A 468-amino-acid polypeptide reads, in one-letter code: MLKQAESMLKWAIEKDNYTTSEKIGLNDYRHVHESLGIGFIALEDIKEDEKLVSFKKDSVLCLTNSDLAQLPEVQSLPSWAALLLVMATENASPNSFWRPYLSIFPTKERITSPFYWDENKKDALLRGTVLESNEDCNEITQLWIDRIEPIIKLYPNRFSQVSYEDFLRMSAVMLAYSFDIEKTKSPISNENEKSAAETSIKEDKNGDAAKKNEGSANQDDEKLHSQSLVGNNCEVNSEDEFSDLESEVDPDELEKAMCPISDMFNGDDELCNIRLYDINGTLTMIATRDIKKGEQLWNTYGELDNSELFRKYGFTKKKGTPHDFVLIKKEHWLPEYIEKLGFEEVEARLELLCREELLYNLEGDFTFSKADLTFKEICLAFVLMEKEKELISVPSKSDIKPKHYRKLLKIIEKRINMYPKISDPKNFDEENAKTLIEGEIDILQNLSAKVKEALTKNRPKKKQKVDH.

The 281-residue stretch at 22–302 (EKIGLNDYRH…KGEQLWNTYG (281 aa)) folds into the SET domain. Residues 188–225 (ISNENEKSAAETSIKEDKNGDAAKKNEGSANQDDEKLH) form a disordered region. Tyr301 contributes to the S-adenosyl-L-methionine binding site.

The protein belongs to the class V-like SAM-binding methyltransferase superfamily. Histone-lysine methyltransferase family. SETD6 subfamily.

The protein resides in the nucleus. Its function is as follows. S-adenosyl-L-methionine-dependent protein-lysine N-methyltransferase that monomethylates 60S ribosomal protein L42 (rpl42) at 'Lys-55'. The sequence is that of Ribosomal lysine N-methyltransferase 4 from Schizosaccharomyces pombe (strain 972 / ATCC 24843) (Fission yeast).